The sequence spans 215 residues: Protein-L-isoaspartate O-methyltransferase (215 aa).

Residue serine 62 is part of the active site.

Belongs to the methyltransferase superfamily. L-isoaspartyl/D-aspartyl protein methyltransferase family.

Its subcellular location is the cytoplasm. It catalyses the reaction [protein]-L-isoaspartate + S-adenosyl-L-methionine = [protein]-L-isoaspartate alpha-methyl ester + S-adenosyl-L-homocysteine. In terms of biological role, catalyzes the methyl esterification of L-isoaspartyl residues in peptides and proteins that result from spontaneous decomposition of normal L-aspartyl and L-asparaginyl residues. It plays a role in the repair and/or degradation of damaged proteins. This is Protein-L-isoaspartate O-methyltransferase from Bradyrhizobium sp. (strain BTAi1 / ATCC BAA-1182).